Consider the following 89-residue polypeptide: Small ribosomal subunit protein uS15 (89 aa).

Belongs to the universal ribosomal protein uS15 family. Part of the 30S ribosomal subunit. Forms a bridge to the 50S subunit in the 70S ribosome, contacting the 23S rRNA.

Functionally, one of the primary rRNA binding proteins, it binds directly to 16S rRNA where it helps nucleate assembly of the platform of the 30S subunit by binding and bridging several RNA helices of the 16S rRNA. Its function is as follows. Forms an intersubunit bridge (bridge B4) with the 23S rRNA of the 50S subunit in the ribosome. The chain is Small ribosomal subunit protein uS15 from Bacteroides thetaiotaomicron (strain ATCC 29148 / DSM 2079 / JCM 5827 / CCUG 10774 / NCTC 10582 / VPI-5482 / E50).